Consider the following 370-residue polypeptide: Serine/threonine-protein kinase SAPK5 (370 aa).

The 257-residue stretch at tyrosine 4–phenylalanine 260 folds into the Protein kinase domain. Residues isoleucine 10–alanine 18 and lysine 33 each bind ATP. The active-site Proton acceptor is the aspartate 123. The segment at glutamate 312–serine 370 is disordered. Positions threonine 330–tyrosine 349 are enriched in acidic residues. Residues aspartate 350–valine 360 are compositionally biased toward basic and acidic residues.

The protein belongs to the protein kinase superfamily. Ser/Thr protein kinase family. Post-translationally, may be phosphorylated. In terms of tissue distribution, expressed in leaf blades, leaf sheaths and roots. Expressed in shoots and roots of young seedlings.

The protein localises to the cytoplasm. It is found in the nucleus. The enzyme catalyses L-seryl-[protein] + ATP = O-phospho-L-seryl-[protein] + ADP + H(+). It carries out the reaction L-threonyl-[protein] + ATP = O-phospho-L-threonyl-[protein] + ADP + H(+). Its activity is regulated as follows. Activated by hyperosmotic stress. May play a role in signal transduction of hyperosmotic response. The protein is Serine/threonine-protein kinase SAPK5 (SAPK5) of Oryza sativa subsp. japonica (Rice).